We begin with the raw amino-acid sequence, 35 residues long: Malate dehydrogenase, mitochondrial (35 aa).

Asn-7 is a binding site for NAD(+). Arg-23 provides a ligand contact to substrate.

This sequence belongs to the LDH/MDH superfamily. MDH type 1 family. In terms of assembly, homodimer.

The protein resides in the mitochondrion matrix. It catalyses the reaction (S)-malate + NAD(+) = oxaloacetate + NADH + H(+). The chain is Malate dehydrogenase, mitochondrial from Capsicum annuum var. annuum (Red pepper).